The primary structure comprises 358 residues: Fructose-bisphosphate aldolase (358 aa).

D-glyceraldehyde 3-phosphate is bound at residue Ser61. The Proton donor role is filled by Asp108. The Zn(2+) site is built by His109, Asp143, Glu173, and His225. Dihydroxyacetone phosphate is bound at residue Gly226. Residue His264 coordinates Zn(2+). Dihydroxyacetone phosphate is bound by residues 265-267 and 286-289; these read GGS and NIDT. A phosphothreonine mark is found at Thr289, Thr312, Thr340, and Thr342.

Belongs to the class II fructose-bisphosphate aldolase family. In terms of assembly, homodimer. The cofactor is Zn(2+).

It catalyses the reaction beta-D-fructose 1,6-bisphosphate = D-glyceraldehyde 3-phosphate + dihydroxyacetone phosphate. It participates in carbohydrate degradation; glycolysis; D-glyceraldehyde 3-phosphate and glycerone phosphate from D-glucose: step 4/4. Its function is as follows. Catalyzes the aldol condensation of dihydroxyacetone phosphate (DHAP or glycerone-phosphate) with glyceraldehyde 3-phosphate (G3P) to form fructose 1,6-bisphosphate (FBP) in gluconeogenesis and the reverse reaction in glycolysis. The polypeptide is Fructose-bisphosphate aldolase (fba1) (Schizosaccharomyces pombe (strain 972 / ATCC 24843) (Fission yeast)).